Here is a 179-residue protein sequence, read N- to C-terminus: Large ribosomal subunit protein uL5 (179 aa).

The protein belongs to the universal ribosomal protein uL5 family. Part of the 50S ribosomal subunit; part of the 5S rRNA/L5/L18/L25 subcomplex. Contacts the 5S rRNA and the P site tRNA. Forms a bridge to the 30S subunit in the 70S ribosome.

Functionally, this is one of the proteins that bind and probably mediate the attachment of the 5S RNA into the large ribosomal subunit, where it forms part of the central protuberance. In the 70S ribosome it contacts protein S13 of the 30S subunit (bridge B1b), connecting the 2 subunits; this bridge is implicated in subunit movement. Contacts the P site tRNA; the 5S rRNA and some of its associated proteins might help stabilize positioning of ribosome-bound tRNAs. This chain is Large ribosomal subunit protein uL5, found in Polaromonas naphthalenivorans (strain CJ2).